Reading from the N-terminus, the 548-residue chain is MKEAELNRDMARYCTDNQCVSLQPQGLGPKSAALMAPRTLRHVQVILALMVVTVIFSLLALFVVASQPWRPEWNKEPPSLLLRGSNNSGHDNHSQFVRETEMQVAIQRLRDYEENSSSCHKEVQILKYQMDNVSSLVQLLGSHLEDVNADILQTKDVLKESGALALETQALRSSLEVASADIHSLRGDLEKANAMTSQTRGLLKSSTENTSAELHVLGRGLEEAQSEIQALRGSLQSANDLSSQTQGFLQHSMDNISAQIQTVRDGMERAGEKMNSLKKELETLTAQTQKANGHLEQTDAQIQGLKAELKSTSSLNSRIEVVNGQMKDASRELQTLRRDLSDVSALKSNVQMLQSNLQRAKTEMQTLKADLQATKALTAKIQGEQNRLGALQEAVAAQKQEQKTQNQVLQLIAQNWKYFNGNFYYFSRDKKPWREAEKFCTSQGAHLASVTSQEEQAFLVQTTSSGDHWIGLTDQGTEGIWRWVDGTPFNNAQSKGFWGKNQPDNWRHRNGEREDCVHVRQQWNDMACGSSYPWVCKKSTGWSAARVG.

Over 1–42 (MKEAELNRDMARYCTDNQCVSLQPQGLGPKSAALMAPRTLRH) the chain is Cytoplasmic. A helical; Signal-anchor for type II membrane protein membrane pass occupies residues 43–69 (VQVILALMVVTVIFSLLALFVVASQPW). Residues 70–548 (RPEWNKEPPS…STGWSAARVG (479 aa)) are Extracellular-facing. Residues asparagine 86, asparagine 92, asparagine 115, asparagine 132, asparagine 209, and asparagine 255 are each glycosylated (N-linked (GlcNAc...) asparagine). Residues 438 to 538 (KFCTSQGAHL…GSSYPWVCKK (101 aa)) enclose the C-type lectin domain. Cystine bridges form between cysteine 440/cysteine 536 and cysteine 516/cysteine 528.

As to expression, kupffer cells.

It is found in the membrane. Its function is as follows. Receptor with an affinity for galactose and fucose. Could be involved in endocytosis. In Mus musculus (Mouse), this protein is C-type lectin domain family 4 member F (Clec4f).